We begin with the raw amino-acid sequence, 159 residues long: ATP synthase subunit b 2 (159 aa).

A helical transmembrane segment spans residues 1-21 (MDATFWAFIALVIFVVIVVYM).

The protein belongs to the ATPase B chain family. In terms of assembly, F-type ATPases have 2 components, F(1) - the catalytic core - and F(0) - the membrane proton channel. F(1) has five subunits: alpha(3), beta(3), gamma(1), delta(1), epsilon(1). F(0) has three main subunits: a(1), b(2) and c(10-14). The alpha and beta chains form an alternating ring which encloses part of the gamma chain. F(1) is attached to F(0) by a central stalk formed by the gamma and epsilon chains, while a peripheral stalk is formed by the delta and b chains.

It localises to the cell inner membrane. Its function is as follows. F(1)F(0) ATP synthase produces ATP from ADP in the presence of a proton or sodium gradient. F-type ATPases consist of two structural domains, F(1) containing the extramembraneous catalytic core and F(0) containing the membrane proton channel, linked together by a central stalk and a peripheral stalk. During catalysis, ATP synthesis in the catalytic domain of F(1) is coupled via a rotary mechanism of the central stalk subunits to proton translocation. Component of the F(0) channel, it forms part of the peripheral stalk, linking F(1) to F(0). This chain is ATP synthase subunit b 2, found in Brucella canis (strain ATCC 23365 / NCTC 10854 / RM-666).